Reading from the N-terminus, the 288-residue chain is MAGAKEIRSKIGSVKSTQKITKAMEMVAASKMRRSQESMAASRPYADTMRKVIGHLALGNLEYRHPYLEEREAKRVGYIIISSDRGLCGGLNINLFKKVMAGMKTWSEDGVEIDLAVIGSKATAFFNSYGGNVIAQNSGLGDKPSLEELIGTVGVMLKKYDEGQLDRLYVVNNKFINTMVQEPTIDQLLPLPKSEDEAMKRTHAWDYIYEPEPKPLLDALLIRYVESQVYQGVVENLACEHVARMIAMKAATDNAGDIIDELQLVYNKARQSAITQELSEIVSGASAV.

The protein belongs to the ATPase gamma chain family. In terms of assembly, F-type ATPases have 2 components, CF(1) - the catalytic core - and CF(0) - the membrane proton channel. CF(1) has five subunits: alpha(3), beta(3), gamma(1), delta(1), epsilon(1). CF(0) has three main subunits: a, b and c.

The protein resides in the cell inner membrane. Functionally, produces ATP from ADP in the presence of a proton gradient across the membrane. The gamma chain is believed to be important in regulating ATPase activity and the flow of protons through the CF(0) complex. In Aliivibrio salmonicida (strain LFI1238) (Vibrio salmonicida (strain LFI1238)), this protein is ATP synthase gamma chain.